The primary structure comprises 337 residues: Viral cathepsin (337 aa).

An N-terminal signal peptide occupies residues M1 to T16. A propeptide spans S17–R126 (activation peptide). 3 disulfides stabilise this stretch: C147/C188, C181/C221, and C276/C324. Residue C150 is part of the active site. Residues H283 and N303 contribute to the active site.

The protein belongs to the peptidase C1 family. Post-translationally, synthesized as an inactive proenzyme and activated by proteolytic removal of the inhibitory propeptide.

The catalysed reaction is Endopeptidase of broad specificity, hydrolyzing substrates of both cathepsin L and cathepsin B.. Functionally, cysteine protease that plays an essential role in host liquefaction to facilitate horizontal transmission of the virus. May participate in the degradation of foreign protein expressed by the baculovirus system. The chain is Viral cathepsin (VCATH) from Mamestra configurata (bertha armyworm).